The chain runs to 763 residues: Phosphoglycerol transferase I (763 aa).

4 consecutive transmembrane segments (helical) span residues 1–21, 26–46, 77–97, and 108–128; these read MSELLSFALFLASVLIYAWKA, WWFAATLTVLGLFVVLNITLF, ILPGIGIVLGLTAVFGALGWI, and FGYSLLALLLALGSVDASPAF.

This sequence belongs to the OpgB family.

It is found in the cell inner membrane. It carries out the reaction a phosphatidylglycerol + a membrane-derived-oligosaccharide D-glucose = a 1,2-diacyl-sn-glycerol + a membrane-derived-oligosaccharide 6-(glycerophospho)-D-glucose.. The protein operates within glycan metabolism; osmoregulated periplasmic glucan (OPG) biosynthesis. Its function is as follows. Transfers a phosphoglycerol residue from phosphatidylglycerol to the membrane-bound nascent glucan backbones. This chain is Phosphoglycerol transferase I, found in Escherichia coli (strain SE11).